A 529-amino-acid polypeptide reads, in one-letter code: Bifunctional purine biosynthesis protein PurH (529 aa).

The region spanning Met1–Val148 is the MGS-like domain. The residue at position 287 (Lys287) is an N6-acetyllysine.

Belongs to the PurH family.

The catalysed reaction is (6R)-10-formyltetrahydrofolate + 5-amino-1-(5-phospho-beta-D-ribosyl)imidazole-4-carboxamide = 5-formamido-1-(5-phospho-D-ribosyl)imidazole-4-carboxamide + (6S)-5,6,7,8-tetrahydrofolate. It carries out the reaction IMP + H2O = 5-formamido-1-(5-phospho-D-ribosyl)imidazole-4-carboxamide. It participates in purine metabolism; IMP biosynthesis via de novo pathway; 5-formamido-1-(5-phospho-D-ribosyl)imidazole-4-carboxamide from 5-amino-1-(5-phospho-D-ribosyl)imidazole-4-carboxamide (10-formyl THF route): step 1/1. Its pathway is purine metabolism; IMP biosynthesis via de novo pathway; IMP from 5-formamido-1-(5-phospho-D-ribosyl)imidazole-4-carboxamide: step 1/1. This is Bifunctional purine biosynthesis protein PurH from Escherichia coli O9:H4 (strain HS).